The sequence spans 375 residues: Mitochondrial phosphate carrier protein 3, mitochondrial (375 aa).

The chain crosses the membrane as a helical span at residues 76 to 96 (AFYAACTFGGILSCGLTHMTV). 3 Solcar repeats span residues 76-160 (AFYA…FKKT), 173-257 (YKTL…IVEM), and 274-353 (LQLG…FKVF). Topologically, residues 97-134 (TPLDLVKCNMQIDPAKYKSISSGFGILLKEQGVKGFFR) are mitochondrial matrix. The helical transmembrane segment at 135-154 (GWVPTLLGYSAQGACKFGFY) threads the bilayer. Residues 155 to 175 (EYFKKTYSDLAGPEYTAKYKT) are Mitochondrial intermembrane-facing. The helical transmembrane segment at 176-196 (LIYLAGSASAEIIADIALCPF) threads the bilayer. Topologically, residues 197-231 (EAVKVRVQTQPGFARGMSDGFPKFIKSEGYGGLYK) are mitochondrial matrix. A helical membrane pass occupies residues 232-251 (GLAPLWGRQIPYTMMKFASF). Over 252-272 (ETIVEMIYKYAIPNPKSECSK) the chain is Mitochondrial intermembrane. Residues 273–293 (GLQLGVSFAGGYVAGVFCAIV) form a helical membrane-spanning segment. Residues 294 to 332 (SHPADNLVSFLNNAKGATVGDAVKKIGMVGLFTRGLPLR) lie on the Mitochondrial matrix side of the membrane. Residues 333 to 353 (IVMIGTLTGAQWGLYDAFKVF) traverse the membrane as a helical segment. Topologically, residues 354–375 (VGLPTTGGVAPAPAIAATEAKA) are mitochondrial intermembrane.

The protein belongs to the mitochondrial carrier (TC 2.A.29) family. In terms of tissue distribution, expressed in stems, leaves and flowers. Strong expression in vascular tissues.

Its subcellular location is the mitochondrion inner membrane. Functionally, transport of phosphate groups from the cytosol to the mitochondrial matrix. Mediates salt stress tolerance through an ATP-dependent pathway and via modulation of the gibberellin metabolism. The polypeptide is Mitochondrial phosphate carrier protein 3, mitochondrial (MPT3) (Arabidopsis thaliana (Mouse-ear cress)).